A 549-amino-acid chain; its full sequence is Oxygen-dependent choline dehydrogenase (549 aa).

4–33 serves as a coordination point for FAD; that stretch reads DFVIIGSGSAGSAMAYRLSEDGRYSVIVIE. H465 acts as the Proton acceptor in catalysis.

Belongs to the GMC oxidoreductase family. Requires FAD as cofactor.

The catalysed reaction is choline + A = betaine aldehyde + AH2. It carries out the reaction betaine aldehyde + NAD(+) + H2O = glycine betaine + NADH + 2 H(+). Its pathway is amine and polyamine biosynthesis; betaine biosynthesis via choline pathway; betaine aldehyde from choline (cytochrome c reductase route): step 1/1. Functionally, involved in the biosynthesis of the osmoprotectant glycine betaine. Catalyzes the oxidation of choline to betaine aldehyde and betaine aldehyde to glycine betaine at the same rate. In Brucella ovis (strain ATCC 25840 / 63/290 / NCTC 10512), this protein is Oxygen-dependent choline dehydrogenase.